The sequence spans 380 residues: Chorismate synthase (380 aa).

R48 contacts NADP(+). FMN contacts are provided by residues 126-128, G300, 315-319, and R342; these read HFS and KPISS.

This sequence belongs to the chorismate synthase family. In terms of assembly, homotetramer. Requires FMNH2 as cofactor.

It carries out the reaction 5-O-(1-carboxyvinyl)-3-phosphoshikimate = chorismate + phosphate. It participates in metabolic intermediate biosynthesis; chorismate biosynthesis; chorismate from D-erythrose 4-phosphate and phosphoenolpyruvate: step 7/7. Its function is as follows. Catalyzes the anti-1,4-elimination of the C-3 phosphate and the C-6 proR hydrogen from 5-enolpyruvylshikimate-3-phosphate (EPSP) to yield chorismate, which is the branch point compound that serves as the starting substrate for the three terminal pathways of aromatic amino acid biosynthesis. This reaction introduces a second double bond into the aromatic ring system. In Lancefieldella parvula (strain ATCC 33793 / DSM 20469 / CCUG 32760 / JCM 10300 / KCTC 3663 / VPI 0546 / 1246) (Atopobium parvulum), this protein is Chorismate synthase.